Consider the following 274-residue polypeptide: Large ribosomal subunit protein uL2 (274 aa).

Residues 223-274 (GIAMNPVDHPHGGGEGRSKGNHPVTPWGMPTKGYKTRKKKQSDKYIISRRKK) form a disordered region. Over residues 230-240 (DHPHGGGEGRS) the composition is skewed to basic and acidic residues. Over residues 256–274 (YKTRKKKQSDKYIISRRKK) the composition is skewed to basic residues.

It belongs to the universal ribosomal protein uL2 family. Part of the 50S ribosomal subunit. Forms a bridge to the 30S subunit in the 70S ribosome.

Functionally, one of the primary rRNA binding proteins. Required for association of the 30S and 50S subunits to form the 70S ribosome, for tRNA binding and peptide bond formation. It has been suggested to have peptidyltransferase activity; this is somewhat controversial. Makes several contacts with the 16S rRNA in the 70S ribosome. The polypeptide is Large ribosomal subunit protein uL2 (Nautilia profundicola (strain ATCC BAA-1463 / DSM 18972 / AmH)).